We begin with the raw amino-acid sequence, 500 residues long: L-arabinose isomerase (500 aa).

Mn(2+) is bound by residues Glu306, Glu333, His349, and His448.

It belongs to the arabinose isomerase family. The cofactor is Mn(2+).

It catalyses the reaction beta-L-arabinopyranose = L-ribulose. The protein operates within carbohydrate degradation; L-arabinose degradation via L-ribulose; D-xylulose 5-phosphate from L-arabinose (bacterial route): step 1/3. Catalyzes the conversion of L-arabinose to L-ribulose. This chain is L-arabinose isomerase, found in Shewanella sp. (strain ANA-3).